The primary structure comprises 354 residues: Peptide chain release factor 1 (354 aa).

An N5-methylglutamine modification is found at glutamine 230. The disordered stretch occupies residues lysine 282–arginine 301.

Belongs to the prokaryotic/mitochondrial release factor family. Methylated by PrmC. Methylation increases the termination efficiency of RF1.

The protein resides in the cytoplasm. Functionally, peptide chain release factor 1 directs the termination of translation in response to the peptide chain termination codons UAG and UAA. The sequence is that of Peptide chain release factor 1 from Leptospira borgpetersenii serovar Hardjo-bovis (strain L550).